We begin with the raw amino-acid sequence, 429 residues long: Probable M18 family aminopeptidase 2 (429 aa).

Positions 82, 156, and 401 each coordinate Zn(2+).

The protein belongs to the peptidase M18 family. Requires Zn(2+) as cofactor.

This Pseudomonas paraeruginosa (strain DSM 24068 / PA7) (Pseudomonas aeruginosa (strain PA7)) protein is Probable M18 family aminopeptidase 2.